Consider the following 403-residue polypeptide: S-adenosylmethionine synthase (403 aa).

An ATP-binding site is contributed by Gly140–Asp145.

It belongs to the AdoMet synthase 2 family. The cofactor is Mg(2+).

It catalyses the reaction L-methionine + ATP + H2O = S-adenosyl-L-methionine + phosphate + diphosphate. The protein operates within amino-acid biosynthesis; S-adenosyl-L-methionine biosynthesis; S-adenosyl-L-methionine from L-methionine: step 1/1. In terms of biological role, catalyzes the formation of S-adenosylmethionine from methionine and ATP. In Sulfolobus acidocaldarius (strain ATCC 33909 / DSM 639 / JCM 8929 / NBRC 15157 / NCIMB 11770), this protein is S-adenosylmethionine synthase.